Here is a 1052-residue protein sequence, read N- to C-terminus: MSMNKFFQPKNALKRAEDLEAVGKPNLALETLHDLLNSSKHKKQWTAVHEEIMIKFLDLCMQLKRAPEAKDGLYQFKIVTGTSAVNSLEKVVRYYLKTAEDKVAEAWQQSQLRDATNVNDEIDDLEEAQTPEQVLLAAVSADGETERANRVQLMPWLRYLWEAYRAVLELLRHHSKMEHAYHATARQAMRFCHQYERRNEFRRLCNMLSLHLNQWRTPYQSKSGQAGIDINNPQTIQYSLDTRFELISYAGKLEQWQEAFRAMEEVTGLLDSAPEKPSPPVWGIYYHKLAQIFWRSKDYAFHAAAWHQMFDNAIRNAKSFNRDDIQYAASAVLLASLTVPLANLDTMVKPMEGYLPEVRASRQQRLAGLLGLSRMPSRDELLQYMFDLNVMTYVHPALKDLYNLVEDEFDPLQLSQKAAPVLEFLKSHEQFAQYVTPLKYILLLRLLKQLSQLYSSLKLERCFKLASFMTPEECEEVLVHAVQDKVLQLRIDHARGSLHFNNNIFAFNERQVNDGPKLQNLQAEMMNGQLTTLSRRLYTAINMIKPAVVQESQMGVKAINRIKDEVAREHVSNLSRRDEIEKQKEELEQSRRRRHQEQMQKHHQNQMQVRQKMAEAVKKNQEELERQKLQLQREEIERQKALEALNDVSSSSAGQKVVQALNKSDLGTKITAQDIHKMAYEQQKKDARERQERLRAEEKRLDHMERAKRLREIPRRKEHIAAMSEQNAKWHTELQSARLEKARVDHAKALGLKELLKAFAPDKDAYIEEKTAERRKEYMAKLDDFKQRMQEQKIRLEREERERKREEKRRAEEEEQRRIKQEEEDRKQREREAKREQERQEQLKLEEAERKKMEEATKLQRQREEQVRAREQEKLSNLSAQTSQPTWKRSARSDAPTTAAPSSMRVSSWKGDASDDSGRSQPFRPSRGGERDSGRSFSGLGDRGDRAPRDTGRSFSGLGDRGDRAPRDTGRSFSGLGDRAPRDFSGRSEPSRSGPRDFSGRSEAGRTSGERRALHVPSGGADKPSGDNVWRSSRGAGSERRVNIPSRGDDKN.

In terms of domain architecture, PCI spans 325–505 (IQYAASAVLL…GSLHFNNNIF (181 aa)). Coiled-coil stretches lie at residues 568 to 712 (REHV…RLRE) and 769 to 882 (EKTA…SAQT). Basic and acidic residues-rich tracts occupy residues 570–600 (HVSN…EQMQ) and 793–874 (KIRL…EQEK). Disordered regions lie at residues 570–606 (HVSN…HQNQ) and 793–1052 (KIRL…DDKN). 2 stretches are compositionally biased toward polar residues: residues 875–887 (LSNL…QPTW) and 895–906 (APTTAAPSSMRV). Composition is skewed to basic and acidic residues over residues 942–952 (DRGDRAPRDTG), 960–970 (DRGDRAPRDTG), 979–1013 (RAPR…ERRA), and 1037–1052 (GSER…DDKN).

The protein belongs to the eIF-3 subunit A family. Component of the eukaryotic translation initiation factor 3 (eIF-3) complex.

It localises to the cytoplasm. Functionally, RNA-binding component of the eukaryotic translation initiation factor 3 (eIF-3) complex, which is involved in protein synthesis of a specialized repertoire of mRNAs and, together with other initiation factors, stimulates binding of mRNA and methionyl-tRNAi to the 40S ribosome. The eIF-3 complex specifically targets and initiates translation of a subset of mRNAs involved in cell proliferation. This is Eukaryotic translation initiation factor 3 subunit A from Monosiga brevicollis (Choanoflagellate).